The sequence spans 279 residues: Phospholipase A and acyltransferase 5 (279 aa).

Disordered regions lie at residues 1–53 (MGLS…GLNS) and 70–117 (QLPA…ENEG). The segment covering 97–106 (LETTPSQKAD) has biased composition (polar residues). The LRAT domain occupies 135-249 (LIEIFRIGYE…LRYGVPRSQQ (115 aa)). Residues His145 and His157 contribute to the active site. Cys233 acts as the Acyl-thioester intermediate in catalysis.

This sequence belongs to the H-rev107 family. Highest expression level in testis and pancreas.

It localises to the cytoplasm. The protein resides in the cytosol. It catalyses the reaction a 1,2-diacyl-sn-glycero-3-phosphocholine + H2O = a 1-acyl-sn-glycero-3-phosphocholine + a fatty acid + H(+). It carries out the reaction a 1,2-diacyl-sn-glycero-3-phosphocholine + H2O = a 2-acyl-sn-glycero-3-phosphocholine + a fatty acid + H(+). The catalysed reaction is 1-hexadecanoyl-2-(5Z,8Z,11Z,14Z-eicosatetraenoyl)-sn-glycero-3-phosphocholine + 1,2-di-(9Z-octadecenoyl)-sn-glycero-3-phosphoethanolamine = N-(5Z,8Z,11Z,14Z-eicosatetraenoyl)-1,2-di-(9Z-octadecenoyl)-sn-glycero-3-phosphoethanolamine + 1-hexadecanoyl-sn-glycero-3-phosphocholine + H(+). The enzyme catalyses 1,2-di-(9Z-octadecenoyl)-sn-glycero-3-phosphoethanolamine + 1,2-dihexadecanoyl-sn-glycero-3-phosphocholine = N-hexadecanoyl-1,2-di-(9Z-octadecenoyl)-sn-glycero-3-phosphoethanolamine + 1-hexadecanoyl-sn-glycero-3-phosphocholine + H(+). It catalyses the reaction 1,2-di-(9Z-octadecenoyl)-sn-glycero-3-phosphoethanolamine + 1,2-dihexadecanoyl-sn-glycero-3-phosphocholine = N-hexadecanoyl-1,2-di-(9Z-octadecenoyl)-sn-glycero-3-phosphoethanolamine + 2-hexadecanoyl-sn-glycero-3-phosphocholine + H(+). It carries out the reaction a 1,2-diacyl-sn-glycero-3-phosphoethanolamine + a 1,2-diacyl-sn-glycero-3-phosphocholine = an N-acyl-1,2-diacyl-sn-glycero-3-phosphoethanolamine + a 1-acyl-sn-glycero-3-phosphocholine + H(+). The catalysed reaction is a 1,2-diacyl-sn-glycero-3-phosphoethanolamine + a 1,2-diacyl-sn-glycero-3-phosphocholine = an N-acyl-1,2-diacyl-sn-glycero-3-phosphoethanolamine + a 2-acyl-sn-glycero-3-phosphocholine + H(+). The enzyme catalyses 1-hexadecanoyl-2-(9Z-octadecenoyl)-sn-glycero-3-phosphocholine + 1,2-di-(9Z-octadecenoyl)-sn-glycero-3-phosphoethanolamine = N,1,2-tri-(9Z-octadecenoyl)-sn-glycero-3-phosphoethanolamine + 1-hexadecanoyl-sn-glycero-3-phosphocholine + H(+). Exhibits both phospholipase A1/2 and acyltransferase activities. Shows phospholipase A1 (PLA1) and A2 (PLA2) activity, catalyzing the calcium-independent release of fatty acids from the sn-1 or sn-2 position of glycerophospholipids. Shows N-acyltransferase activity, catalyzing the calcium-independent transfer of a fatty acyl group at the sn-1 position of phosphatidylcholine (PC) and other glycerophospholipids to the primary amine of phosphatidylethanolamine (PE), forming N-acylphosphatidylethanolamine (NAPE), which serves as precursor for N-acylethanolamines (NAEs). The sequence is that of Phospholipase A and acyltransferase 5 from Homo sapiens (Human).